The primary structure comprises 323 residues: Global nitrogen regulator NrpRI (323 aa).

Residues 11-76 are winged helix-turn-helix; sequence IEIMRVIHES…TLTDLGENEM (66 aa). The interval 86 to 323 is NRD; the sequence is GFVISRIEEM…MLDYQTMKEI (238 aa).

This sequence belongs to the NrpR family. Forms a complex with NrpRII and the general archaeal transcription factors TBP and TFB. Interacts directly with NrpRII.

Under nitrogen limitation, binding of 2-oxoglutarate to the NrpRI/NrpRII complex decreases the binding affinity of NrpRI to DNA as well as the binding affinity of NrpRII to TBP and TFB, which leads to removal of the complex from the operator, RNA polymerase recruitment and initiation of transcription. Its function is as follows. Plays a major role in nitrogen regulation. Under nitrogen sufficiency, binds to the nifH and the glnk1 promoters, leading to repression of the transcription of the genes. The sequence is that of Global nitrogen regulator NrpRI from Methanosarcina mazei (strain ATCC BAA-159 / DSM 3647 / Goe1 / Go1 / JCM 11833 / OCM 88) (Methanosarcina frisia).